We begin with the raw amino-acid sequence, 1534 residues long: MDTQRFQSQFHWHLSFKFSGAIAACLSLSLVGTGLANADDSLPSSNYAPPAGGTFFLLADSSFSSSEESKVRLEAPGRDYRRYQMEEYGGVDVRLYRIPDPMAFLRQQKNLHRIVVQPQYLGDGLNNTLTWLWDNWYGKSRRVMQRTFSSQSRQNVTQALPELQLGNAIIKPSRYVQNNQFSPLKKYPLVEQFRYPLWQAKPVEPQQGVKLEGASSNFISPQPGNIYIPLGQQEPGLYLVEAMVGGYRATTVVFVSDTVALSKVSGKELLVWTAGKKQGEAKPGSEILWTDGLGVMTRGVTDDSGTLQLQHISPERSYILGKDAEGGVFVSENFFYESEIYNTRLYIFTDRPLYRAGDRVDVKVMGREFHDPLHSSPIVSAPAKLSVLDANGSLLQTVDVTLDARNGGQGSFRLPENAVAGGYELRLAYRNQVYSSSFRVANYIKPHFEIGLALDKKEFKTGEAVSGKLQLLYPDGEPVKNARVQLSLRAQQLSMVGNDLRYAGRFPVSLEGSETVSDASGHVALNLPAADKPSRYLLTVSASDGAAYRVTTTKEILIERGLAHYSLSTAAQYSNSGESVVFRYAALESSKQVPVTYEWLRLEDRTSHSGDLPSGGKSFTVNFDKPGNYNLTLRDKDGLILAGLSHAVSGKGSMSHTGTVDIVADKTLYQPGETAKMLITFPEPIDEALLTLERDRVEQQSLLSHPANWLTLQRLNDTQYEARVPVSNSFAPNITFSVLYTRNGQYSFQNAGIKVAVPQLDIRVKTDKTHYQPGELVNVELTSSLKGKPVSAQLTVGVVDEMIYALQPEIAPNIGKFFYPLGRNNVRTSSSLSFISYDQALSSEPVAPGATNRSERRVKMLERPRREEVDTAAWMPSLTTDKQGKAYFTFLMPDSLTRWRITARGMNGDGLVGQGRAYLRSEKNLYMKWSMPTVYRVGDKPSAGLFIFSQQDNEPVALVTKFAGAEMRQTLTLHKGANYISLAQNIQQSGLLSAELQQNGQVQDSISTKLSFVDNSWPVEQQKNVMLGGGDNALMLPEQASNIRLQSSETPQEIFRNNLDALVDEPWGGVINTGSRLIPLSLAWRSLADHQSAAANDIRQMIQDNRLRLMQLAGPGARFTWWGEDGNGDAFLTAWAWYADWQASQALGVTQQPEYWQHMLDSYAEQADNMPLLHRALVLAWAQEMNLPCKTLLKGLDEAIARRGTKTEDFSEEDTRDINDSLILDTPESPLADAVANVLTMTLLKKAQLKSTVMPQVQQYAWDKAVNSNQPLAHTVVLLNSGGDATQAAAILSGLTAEQSTIERALAMNWLAKYMATMPSVVLPAPAGAWAKHKLTGGGEYWRWVGQGVPDILSFGDELSPQNVQVRWREAAKTAQQSNIPVTVERQLYRLIPGEEEMSFTLQPVTSNEIDSDALYLDEITLTSEQDAVLRYGQVEVPLPPGADVERTTWGISVNKPNAGKQQGQLLEKARNEMGELAYMVPVKELTGTVTFRHLLRFSQKGQFVLPPARYVRSYAPAQQSVAAGSEWTGMQVK.

Positions 1–38 are cleaved as a signal peptide; the sequence is MDTQRFQSQFHWHLSFKFSGAIAACLSLSLVGTGLANA.

It belongs to the protease inhibitor I39 (alpha-2-macroglobulin) family. Bacterial alpha-2-macroglobulin subfamily.

This chain is Alpha-2-macroglobulin homolog (yfaS), found in Escherichia coli O157:H7.